The primary structure comprises 511 residues: Histidine ammonia-lyase (511 aa).

The segment at residues 144–146 (ASG) is a cross-link (5-imidazolinone (Ala-Gly)). S145 is subject to 2,3-didehydroalanine (Ser).

It belongs to the PAL/histidase family. Post-translationally, contains an active site 4-methylidene-imidazol-5-one (MIO), which is formed autocatalytically by cyclization and dehydration of residues Ala-Ser-Gly.

Its subcellular location is the cytoplasm. It carries out the reaction L-histidine = trans-urocanate + NH4(+). It participates in amino-acid degradation; L-histidine degradation into L-glutamate; N-formimidoyl-L-glutamate from L-histidine: step 1/3. The chain is Histidine ammonia-lyase from Halalkalibacterium halodurans (strain ATCC BAA-125 / DSM 18197 / FERM 7344 / JCM 9153 / C-125) (Bacillus halodurans).